Consider the following 326-residue polypeptide: uncharacterized protein (326 aa).

Residue serine 132 participates in substrate binding. Residue tyrosine 157 is the Proton acceptor of the active site.

It belongs to the NAD(P)-dependent epimerase/dehydratase family. dTDP-glucose dehydratase subfamily.

This is an uncharacterized protein from Methanocaldococcus jannaschii (strain ATCC 43067 / DSM 2661 / JAL-1 / JCM 10045 / NBRC 100440) (Methanococcus jannaschii).